Here is a 276-residue protein sequence, read N- to C-terminus: Phosphatidylglycerol--prolipoprotein diacylglyceryl transferase (276 aa).

3 helical membrane-spanning segments follow: residues 17–37, 63–83, and 95–115; these read LAIH…FFLA, ILFL…CLFY, and ILAV…VLAS. R146 contacts a 1,2-diacyl-sn-glycero-3-phospho-(1'-sn-glycerol). Transmembrane regions (helical) follow at residues 182–202, 209–229, and 235–255; these read SQVY…WLYA, GQVS…AEYF, and FLGI…PMIV.

It belongs to the Lgt family.

The protein resides in the cell inner membrane. The catalysed reaction is L-cysteinyl-[prolipoprotein] + a 1,2-diacyl-sn-glycero-3-phospho-(1'-sn-glycerol) = an S-1,2-diacyl-sn-glyceryl-L-cysteinyl-[prolipoprotein] + sn-glycerol 1-phosphate + H(+). Its pathway is protein modification; lipoprotein biosynthesis (diacylglyceryl transfer). Its function is as follows. Catalyzes the transfer of the diacylglyceryl group from phosphatidylglycerol to the sulfhydryl group of the N-terminal cysteine of a prolipoprotein, the first step in the formation of mature lipoproteins. This is Phosphatidylglycerol--prolipoprotein diacylglyceryl transferase from Polaromonas sp. (strain JS666 / ATCC BAA-500).